The primary structure comprises 345 residues: RDS/peripherin-like protein xRDS35 (345 aa).

The Cytoplasmic segment spans residues 1 to 24; it reads MVLFKAKFSFQRRVKLAQTLWLLS. Residues 25–43 form a helical membrane-spanning segment; that stretch reads WLSVLVGCLTFGMGIFLKV. The Lumenal portion of the chain corresponds to 44-61; that stretch reads QLWIHNEVMENTSAHAVP. N-linked (GlcNAc...) asparagine glycosylation occurs at Asn54. Residues 62 to 80 form a helical membrane-spanning segment; that stretch reads NTVITAGLVGILLGIYAGK. The Cytoplasmic segment spans residues 81 to 99; the sequence is VSQASMDVTKYQRWKSFMM. The helical transmembrane segment at 100–123 threads the bilayer; it reads PFFFLAILSCLVCLAALVLSVALR. At 124 to 264 the chain is on the lumenal side; that stretch reads GTLEESLKIG…LSYYTGIMAT (141 aa). Asn229 is a glycosylation site (N-linked (GlcNAc...) asparagine). A helical membrane pass occupies residues 265–290; the sequence is NGAAVTLSFLLQASVLVSLRYLHTSM. Topologically, residues 291-345 are cytoplasmic; sequence DKISGPDDMEADTEGFILEKGVTETMNTTLEKMKGLFMSNQVETAEGGGEAAAAS.

Belongs to the PRPH2/ROM1 family. In terms of assembly, homodimer; disulfide-linked. In terms of tissue distribution, rod specific.

The protein localises to the membrane. The chain is RDS/peripherin-like protein xRDS35 (rds35) from Xenopus laevis (African clawed frog).